A 229-amino-acid chain; its full sequence is Large ribosomal subunit protein uL1 (229 aa).

The protein belongs to the universal ribosomal protein uL1 family. As to quaternary structure, part of the 50S ribosomal subunit.

Binds directly to 23S rRNA. The L1 stalk is quite mobile in the ribosome, and is involved in E site tRNA release. Its function is as follows. Protein L1 is also a translational repressor protein, it controls the translation of the L11 operon by binding to its mRNA. This is Large ribosomal subunit protein uL1 from Streptococcus pneumoniae (strain Taiwan19F-14).